The chain runs to 226 residues: Probable endolytic peptidoglycan transglycosylase RlpA (226 aa).

Positions Met1–Ser26 are cleaved as a signal peptide. A lipid anchor (N-palmitoyl cysteine) is attached at Cys27. Cys27 carries S-diacylglycerol cysteine lipidation.

It belongs to the RlpA family.

It localises to the cell membrane. Its function is as follows. Lytic transglycosylase with a strong preference for naked glycan strands that lack stem peptides. The chain is Probable endolytic peptidoglycan transglycosylase RlpA from Aquifex aeolicus (strain VF5).